A 261-amino-acid chain; its full sequence is Tryptophan synthase alpha chain (261 aa).

Catalysis depends on proton acceptor residues glutamate 49 and aspartate 60.

It belongs to the TrpA family. In terms of assembly, tetramer of two alpha and two beta chains.

The catalysed reaction is (1S,2R)-1-C-(indol-3-yl)glycerol 3-phosphate + L-serine = D-glyceraldehyde 3-phosphate + L-tryptophan + H2O. The protein operates within amino-acid biosynthesis; L-tryptophan biosynthesis; L-tryptophan from chorismate: step 5/5. In terms of biological role, the alpha subunit is responsible for the aldol cleavage of indoleglycerol phosphate to indole and glyceraldehyde 3-phosphate. In Roseiflexus sp. (strain RS-1), this protein is Tryptophan synthase alpha chain.